Here is a 217-residue protein sequence, read N- to C-terminus: MOB kinase activator 3A (217 aa).

Residues Cys-83, Cys-88, His-165, and His-170 each coordinate Zn(2+).

It belongs to the MOB1/phocein family.

May regulate the activity of kinases. This chain is MOB kinase activator 3A (MOB3A), found in Bos taurus (Bovine).